A 931-amino-acid chain; its full sequence is Synaptopodin (931 aa).

Disordered regions lie at residues 56 to 78 (EEEG…APAI) and 113 to 243 (ASVS…MEGY). Ser-134 bears the Phosphoserine mark. Positions 136–148 (TEKDLKEAKERSQ) are enriched in basic and acidic residues. 2 stretches are compositionally biased toward polar residues: residues 153-164 (QLTTPPSSNSRG) and 188-200 (PKLS…TGHP). 3 positions are modified to phosphoserine: Ser-202, Ser-222, and Ser-258. The span at 214–232 (PTSPSKPGSPKHSSSQSPS) shows a compositional bias: low complexity. The disordered stretch occupies residues 280–420 (GLHLSQNRET…SSSGPPAADL (141 aa)). 2 stretches are compositionally biased toward polar residues: residues 282 to 293 (HLSQNRETQQSS) and 309 to 370 (INQN…NTPS). The span at 373 to 384 (DGQRPVPAEEVR) shows a compositional bias: basic and acidic residues. Residues Ser-490 and Ser-514 each carry the phosphoserine modification. Disordered regions lie at residues 542-591 (RRPL…KGQV) and 691-711 (SPRI…EASG). Residue Thr-549 is modified to Phosphothreonine. The PPxY motif signature appears at 551 to 554 (PPTY). Positions 556–568 (ETLSTAPVASQVR) are enriched in polar residues. At Ser-569 the chain carries Phosphoserine. Residues 569-580 (SPPSYSTLYPSS) are compositionally biased toward low complexity. The short motif at 570–573 (PPSY) is the PPxY motif element. 4 positions are modified to phosphoserine: Ser-691, Ser-742, Ser-746, and Ser-767. Residue Thr-771 is modified to Phosphothreonine. The disordered stretch occupies residues 775-918 (SLYHGYLPEN…RPSFSTRNAG (144 aa)). Residues 816-841 (SSRATSSRASSRTVSPRAASPAKPSS) show a composition bias toward low complexity. Ser-835 is modified (phosphoserine). Arg-850 carries the omega-N-methylarginine modification. Ser-856 is modified (phosphoserine). Polar residues predominate over residues 874–895 (VQDSLQPTAVSPTYSSDISPVS).

It belongs to the synaptopodin family. In terms of assembly, interacts with BAIAP1. Interacts with actin. Interacts (via PPxY motifs) with WWC1 (via WW domains). In terms of processing, O-glycosylated. As to expression, expressed at high levels in brain and at moderate, but still significant levels in the heart, skeletal muscle, lung and kidney. In brain, expressed in the cerebral cortex, hippocampus, olfactory bulb and striatum.

The protein localises to the cytoplasm. It is found in the cytoskeleton. Its subcellular location is the cell junction. The protein resides in the tight junction. It localises to the perikaryon. The protein localises to the cell projection. It is found in the dendritic spine. Its subcellular location is the postsynaptic density. The protein resides in the synapse. It localises to the cytosol. In terms of biological role, actin-associated protein that may play a role in modulating actin-based shape and motility of dendritic spines and renal podocyte foot processes. Seems to be essential for the formation of spine apparatuses in spines of telencephalic neurons, which is involved in synaptic plasticity. This is Synaptopodin (Synpo) from Rattus norvegicus (Rat).